A 691-amino-acid chain; its full sequence is DNA topoisomerase 1 (691 aa).

The Toprim domain maps to 3 to 114; that stretch reads DYLVIVESPA…DCRVVFNEIT (112 aa). Positions 9 and 82 each coordinate Mg(2+). Residues 129–558 enclose the Topo IA-type catalytic domain; that stretch reads NMDLVDAQQA…NFYTDFEKRV (430 aa). The tract at residues 163–168 is interaction with DNA; sequence SAGRVQ. Tyr-298 functions as the O-(5'-phospho-DNA)-tyrosine intermediate in the catalytic mechanism. 3 consecutive C4-type zinc fingers follow at residues 579 to 605, 619 to 647, and 660 to 683; these read CELCSSPMVYKMGRYGKFLACSNFPDC, CPSCGEGNIVERKSKKKRVFYGCDRYPDC, and CPKCGKMLVEKKLKKGIQVQCVEC.

This sequence belongs to the type IA topoisomerase family. Monomer. Interacts with the RNA polymerase core. It depends on Mg(2+) as a cofactor.

The catalysed reaction is ATP-independent breakage of single-stranded DNA, followed by passage and rejoining.. Functionally, releases the supercoiling and torsional tension of DNA, which is introduced during the DNA replication and transcription, by transiently cleaving and rejoining one strand of the DNA duplex. Introduces a single-strand break via transesterification at a target site in duplex DNA. The scissile phosphodiester is attacked by the catalytic tyrosine of the enzyme, resulting in the formation of a DNA-(5'-phosphotyrosyl)-enzyme intermediate and the expulsion of a 3'-OH DNA strand. The free DNA strand then undergoes passage around the unbroken strand, thus removing DNA supercoils. Finally, in the religation step, the DNA 3'-OH attacks the covalent intermediate to expel the active-site tyrosine and restore the DNA phosphodiester backbone. The sequence is that of DNA topoisomerase 1 from Bacillus subtilis (strain 168).